The primary structure comprises 169 residues: Dihydrofolate reductase type 8 (169 aa).

The region spanning 3–169 (ELHAILAATA…FTYRKKELTE (167 aa)) is the DHFR domain.

Belongs to the dihydrofolate reductase family. In terms of assembly, homodimer.

It catalyses the reaction (6S)-5,6,7,8-tetrahydrofolate + NADP(+) = 7,8-dihydrofolate + NADPH + H(+). It participates in cofactor biosynthesis; tetrahydrofolate biosynthesis; 5,6,7,8-tetrahydrofolate from 7,8-dihydrofolate: step 1/1. In terms of biological role, key enzyme in folate metabolism. Catalyzes an essential reaction for de novo glycine and purine synthesis, and for DNA precursor synthesis. The protein is Dihydrofolate reductase type 8 (dhfrVIII) of Escherichia coli.